The following is a 429-amino-acid chain: MVSLSSHPARALRGEIAVPGDKSISHRSIMLGSIARGVTTVSGFLRGEDNIATLDAFRAMGVQVHDDGETLRIEGKGLHGLTEAEDVIDCGNSGTSIRLLTGLMAAQRFYTVLTGDRYLRRRPMRRVVEPLSRMGACIHGRDNGEKAPLAIVGRPLTGIAYDSPVASAQVKSALMLAGLYADGATRVTEPHLSRDHSERMFRHFGARLETDAAGVTVYGGHELDGRDIVVPGDISSAAFFLVAALIVPGSELLIRGVGVNPTRTGILDILAAMGGSVELLDQREVSGEPVADLLVRSSALKGIEIGGDVVPRAIDEFPVICVAAALAEGTTVIRDARELRVKETDRIAAMAANLRAAGATITETADGMIIEGTGRLNGVTVESFGDHRIAMSMLVAGLAASGAITVSDTECIATSFPTFTALLDKVAVR.

The 3-phosphoshikimate site is built by lysine 22, serine 23, and arginine 27. A phosphoenolpyruvate-binding site is contributed by lysine 22. Residues glycine 94 and arginine 122 each coordinate phosphoenolpyruvate. Residues serine 167, glutamine 169, aspartate 315, and lysine 342 each coordinate 3-phosphoshikimate. Position 169 (glutamine 169) interacts with phosphoenolpyruvate. Aspartate 315 functions as the Proton acceptor in the catalytic mechanism. 2 residues coordinate phosphoenolpyruvate: arginine 346 and arginine 388.

The protein belongs to the EPSP synthase family. Monomer.

Its subcellular location is the cytoplasm. The catalysed reaction is 3-phosphoshikimate + phosphoenolpyruvate = 5-O-(1-carboxyvinyl)-3-phosphoshikimate + phosphate. It functions in the pathway metabolic intermediate biosynthesis; chorismate biosynthesis; chorismate from D-erythrose 4-phosphate and phosphoenolpyruvate: step 6/7. Its function is as follows. Catalyzes the transfer of the enolpyruvyl moiety of phosphoenolpyruvate (PEP) to the 5-hydroxyl of shikimate-3-phosphate (S3P) to produce enolpyruvyl shikimate-3-phosphate and inorganic phosphate. The polypeptide is 3-phosphoshikimate 1-carboxyvinyltransferase (Geobacter sulfurreducens (strain ATCC 51573 / DSM 12127 / PCA)).